The sequence spans 664 residues: DNA ligase (664 aa).

Residues 32–36 (DKEYD) and 80–81 (SL) contribute to the NAD(+) site. The active-site N6-AMP-lysine intermediate is the Lys-122. NAD(+) is bound by residues Arg-144, Glu-178, and Lys-314. Residues Cys-407, Cys-410, Cys-423, and Cys-429 each contribute to the Zn(2+) site. The region spanning 587–664 (IDENPFMDKT…NEEEFSNKIK (78 aa)) is the BRCT domain.

The protein belongs to the NAD-dependent DNA ligase family. LigA subfamily. It depends on Mg(2+) as a cofactor. The cofactor is Mn(2+).

The enzyme catalyses NAD(+) + (deoxyribonucleotide)n-3'-hydroxyl + 5'-phospho-(deoxyribonucleotide)m = (deoxyribonucleotide)n+m + AMP + beta-nicotinamide D-nucleotide.. In terms of biological role, DNA ligase that catalyzes the formation of phosphodiester linkages between 5'-phosphoryl and 3'-hydroxyl groups in double-stranded DNA using NAD as a coenzyme and as the energy source for the reaction. It is essential for DNA replication and repair of damaged DNA. This Clostridium botulinum (strain Loch Maree / Type A3) protein is DNA ligase.